A 366-amino-acid chain; its full sequence is Phospho-N-acetylmuramoyl-pentapeptide-transferase (366 aa).

The next 10 membrane-spanning stretches (helical) occupy residues 27–47, 71–91, 93–113, 138–158, 174–194, 205–225, 245–265, 268–288, 297–317, and 343–363; these read AALF…IASL, TPTM…LLWA, LSSI…AIGF, FVIA…AGAA, LMLN…VGAG, GLAI…AYLA, LAVI…FNAP, AIFM…TVAV, VIIG…VFWF, and QVVI…LSTL.

Belongs to the glycosyltransferase 4 family. MraY subfamily. It depends on Mg(2+) as a cofactor.

It localises to the cell inner membrane. The enzyme catalyses UDP-N-acetyl-alpha-D-muramoyl-L-alanyl-gamma-D-glutamyl-meso-2,6-diaminopimeloyl-D-alanyl-D-alanine + di-trans,octa-cis-undecaprenyl phosphate = di-trans,octa-cis-undecaprenyl diphospho-N-acetyl-alpha-D-muramoyl-L-alanyl-D-glutamyl-meso-2,6-diaminopimeloyl-D-alanyl-D-alanine + UMP. It functions in the pathway cell wall biogenesis; peptidoglycan biosynthesis. Functionally, catalyzes the initial step of the lipid cycle reactions in the biosynthesis of the cell wall peptidoglycan: transfers peptidoglycan precursor phospho-MurNAc-pentapeptide from UDP-MurNAc-pentapeptide onto the lipid carrier undecaprenyl phosphate, yielding undecaprenyl-pyrophosphoryl-MurNAc-pentapeptide, known as lipid I. In Sinorhizobium medicae (strain WSM419) (Ensifer medicae), this protein is Phospho-N-acetylmuramoyl-pentapeptide-transferase.